The chain runs to 555 residues: Carboxylic ester hydrolase (555 aa).

A signal peptide spans 1–19 (MELSVIALLLLGFVNFSWQ). A disulfide bridge connects residues Cys86 and Cys107. N-linked (GlcNAc...) asparagine glycosylation is found at Asn120 and Asn144. Ser211 (acyl-ester intermediate) is an active-site residue. Cys263 and Cys274 are disulfide-bonded. Glu336 serves as the catalytic Charge relay system. Asn369 and Asn397 each carry an N-linked (GlcNAc...) asparagine glycan. The Charge relay system role is filled by His459. Residues Asn473 and Asn533 are each glycosylated (N-linked (GlcNAc...) asparagine).

This sequence belongs to the type-B carboxylesterase/lipase family. Post-translationally, N-glycosylated. As to expression, expressed in several tissues, including epidermis (at protein level), fat body (at protein level), gut (at protein level), muscle (at protein level), and venom gland (at protein level).

The protein localises to the secreted. It carries out the reaction a carboxylic ester + H2O = an alcohol + a carboxylate + H(+). Its function is as follows. Lipolytic agent that may be involved in distributing the venom via degradation of blood triglycerides. The recombinant protein degrades triglycerides and exhibits high lipolytic activity toward long-chain triglycerides (tested on tributyrin, trioctanoin and triolein). Does not affect mammalian cells. In Bombus ignitus (Bumblebee), this protein is Carboxylic ester hydrolase (vCaE).